The chain runs to 347 residues: Phosphoribosylformylglycinamidine cyclo-ligase (347 aa).

Belongs to the AIR synthase family.

It localises to the cytoplasm. It catalyses the reaction 2-formamido-N(1)-(5-O-phospho-beta-D-ribosyl)acetamidine + ATP = 5-amino-1-(5-phospho-beta-D-ribosyl)imidazole + ADP + phosphate + H(+). It participates in purine metabolism; IMP biosynthesis via de novo pathway; 5-amino-1-(5-phospho-D-ribosyl)imidazole from N(2)-formyl-N(1)-(5-phospho-D-ribosyl)glycinamide: step 2/2. The protein is Phosphoribosylformylglycinamidine cyclo-ligase of Alkaliphilus metalliredigens (strain QYMF).